A 708-amino-acid polypeptide reads, in one-letter code: Leukotoxin translocation ATP-binding protein LktB (708 aa).

One can recognise a Peptidase C39 domain in the interval 1–126; it reads MEANHQRNDL…ACYQGQLILV (126 aa). The ABC transmembrane type-1 domain occupies 155-437; that stretch reads FLETLIVSIF…LAQLWQDFQQ (283 aa). Helical transmembrane passes span 159-179, 192-212, 270-290, 296-316, and 389-409; these read LIVS…FQVV, LNII…LSGL, ALTS…MWYY, LVIL…SPIL, and VMVI…LSIG. The region spanning 469–704 is the ABC transporter domain; that stretch reads ISFKNIRFRY…SNGLYSYLHQ (236 aa). 503-510 is an ATP binding site; the sequence is GRSGSGKS.

This sequence belongs to the ABC transporter superfamily. Protein-1 exporter (TC 3.A.1.109) family. As to quaternary structure, homodimer.

It localises to the cell inner membrane. It carries out the reaction ATP + H2O + proteinSide 1 = ADP + phosphate + proteinSide 2.. In terms of biological role, part of the ABC transporter complex LktBD involved in leukotoxin export. Transmembrane domains (TMD) form a pore in the inner membrane and the ATP-binding domain (NBD) is responsible for energy generation. The protein is Leukotoxin translocation ATP-binding protein LktB (lktB) of Mannheimia haemolytica (Pasteurella haemolytica).